Here is a 697-residue protein sequence, read N- to C-terminus: Phosphate acetyltransferase (697 aa).

The tract at residues 374–697 (LFLYNLVQAA…TVVITALQVK (324 aa)) is phosphate acetyltransferase.

The protein in the N-terminal section; belongs to the CobB/CobQ family. This sequence in the C-terminal section; belongs to the phosphate acetyltransferase and butyryltransferase family.

It is found in the cytoplasm. The enzyme catalyses acetyl-CoA + phosphate = acetyl phosphate + CoA. It functions in the pathway metabolic intermediate biosynthesis; acetyl-CoA biosynthesis; acetyl-CoA from acetate: step 2/2. Functionally, involved in acetate metabolism. This is Phosphate acetyltransferase (pta) from Synechocystis sp. (strain ATCC 27184 / PCC 6803 / Kazusa).